A 265-amino-acid polypeptide reads, in one-letter code: 4-hydroxy-tetrahydrodipicolinate reductase (265 aa).

NAD(+) contacts are provided by residues 7–12 (GASGRM), D33, 96–98 (GTT), and 120–123 (AANM). H153 functions as the Proton donor/acceptor in the catalytic mechanism. A (S)-2,3,4,5-tetrahydrodipicolinate-binding site is contributed by H154. K157 (proton donor) is an active-site residue. 163–164 (GT) is a (S)-2,3,4,5-tetrahydrodipicolinate binding site.

Belongs to the DapB family.

It is found in the cytoplasm. The catalysed reaction is (S)-2,3,4,5-tetrahydrodipicolinate + NAD(+) + H2O = (2S,4S)-4-hydroxy-2,3,4,5-tetrahydrodipicolinate + NADH + H(+). It catalyses the reaction (S)-2,3,4,5-tetrahydrodipicolinate + NADP(+) + H2O = (2S,4S)-4-hydroxy-2,3,4,5-tetrahydrodipicolinate + NADPH + H(+). Its pathway is amino-acid biosynthesis; L-lysine biosynthesis via DAP pathway; (S)-tetrahydrodipicolinate from L-aspartate: step 4/4. Functionally, catalyzes the conversion of 4-hydroxy-tetrahydrodipicolinate (HTPA) to tetrahydrodipicolinate. The protein is 4-hydroxy-tetrahydrodipicolinate reductase of Cupriavidus metallidurans (strain ATCC 43123 / DSM 2839 / NBRC 102507 / CH34) (Ralstonia metallidurans).